The chain runs to 510 residues: Protein phosphatase EYA3 (510 aa).

Disordered stretches follow at residues 1–32 (MQEPREQTLSQVNNPDASDEKPETSSLASNLS) and 175–233 (YQTE…DASS). Polar residues predominate over residues 7 to 16 (QTLSQVNNPD). Residues 192–203 (LPSDSSASPPLS) are compositionally biased toward low complexity. A phosphoserine mark is found at Ser199 and Ser203. Asp246 functions as the Nucleophile in the catalytic mechanism. Residues Asp246 and Asp248 each contribute to the Mg(2+) site. Catalysis depends on Asp248, which acts as the Proton donor. Ser375 and Ser409 each carry phosphoserine. Asp474 contributes to the Mg(2+) binding site.

It belongs to the HAD-like hydrolase superfamily. EYA family. As to quaternary structure, interacts with SIX1 and DACH1, and probably SIX2, SIX4 and SIX5. Mg(2+) is required as a cofactor. Post-translationally, ser-203 phosphorylation is required for localization at sites of DNA damage and directing interaction with H2AX. In terms of tissue distribution, expressed in branchial arches, CNS and developing eye.

It localises to the cytoplasm. It is found in the nucleus. It carries out the reaction O-phospho-L-tyrosyl-[protein] + H2O = L-tyrosyl-[protein] + phosphate. In terms of biological role, tyrosine phosphatase that specifically dephosphorylates 'Tyr-142' of histone H2AX (H2AXY142ph). 'Tyr-142' phosphorylation of histone H2AX plays a central role in DNA repair and acts as a mark that distinguishes between apoptotic and repair responses to genotoxic stress. Promotes efficient DNA repair by dephosphorylating H2AX, promoting the recruitment of DNA repair complexes containing MDC1. Its function as histone phosphatase probably explains its role in transcription regulation during organogenesis. The phosphatase activity has been shown in vitro. Coactivates SIX1. Seems to coactivate SIX2, SIX4 and SIX5. The repression of precursor cell proliferation in myoblasts by SIX1 is switched to activation through recruitment of EYA3 to the SIX1-DACH1 complex and seems to be dependent on EYA3 phosphatase activity. May be involved in development of the eye. May play a role in mediating the induction and differentiation of cranial placodes. This chain is Protein phosphatase EYA3 (Eya3), found in Mus musculus (Mouse).